A 132-amino-acid chain; its full sequence is Small ribosomal subunit protein uS9 (132 aa).

This sequence belongs to the universal ribosomal protein uS9 family.

The protein is Small ribosomal subunit protein uS9 of Mesomycoplasma hyopneumoniae (strain 232) (Mycoplasma hyopneumoniae).